Consider the following 360-residue polypeptide: Isocitrate dehydrogenase [NAD] subunit 1, mitochondrial (360 aa).

The N-terminal 11 residues, 1-11, are a transit peptide targeting the mitochondrion; it reads MLNRTIAKRTL. Substrate-binding residues include Arg109, Arg140, and Asp228. Asp228 serves as a coordination point for Mg(2+).

This sequence belongs to the isocitrate and isopropylmalate dehydrogenases family. Octamer of two non-identical subunits IDH1 and IDH2. The cofactor is Mg(2+). Requires Mn(2+) as cofactor.

The protein resides in the mitochondrion. It carries out the reaction D-threo-isocitrate + NAD(+) = 2-oxoglutarate + CO2 + NADH. Allosterically regulated by several compounds including AMP, NAD(+), and citrate. Functionally, performs an essential role in the oxidative function of the citric acid cycle. Also binds RNA; specifically to the 5'-untranslated leaders of mitochondrial mRNAs. The chain is Isocitrate dehydrogenase [NAD] subunit 1, mitochondrial (IDH1) from Saccharomyces cerevisiae (strain ATCC 204508 / S288c) (Baker's yeast).